A 399-amino-acid chain; its full sequence is Elongation factor Tu (399 aa).

In terms of domain architecture, tr-type G spans 10-204 (KPHVNIGTIG…SVDESIPEPE (195 aa)). Positions 19 to 26 (GHVDHGKT) are G1. 19-26 (GHVDHGKT) contributes to the GTP binding site. Mg(2+) is bound at residue Thr26. A G2 region spans residues 60-64 (GITIN). Residues 81–84 (DCPG) form a G3 region. GTP is bound by residues 81–85 (DCPGH) and 136–139 (NKCD). Positions 136–139 (NKCD) are G4. The G5 stretch occupies residues 174–176 (SAL).

This sequence belongs to the TRAFAC class translation factor GTPase superfamily. Classic translation factor GTPase family. EF-Tu/EF-1A subfamily. In terms of assembly, monomer.

The protein resides in the cytoplasm. It catalyses the reaction GTP + H2O = GDP + phosphate + H(+). GTP hydrolase that promotes the GTP-dependent binding of aminoacyl-tRNA to the A-site of ribosomes during protein biosynthesis. The chain is Elongation factor Tu from Prochlorococcus marinus (strain MIT 9211).